Consider the following 110-residue polypeptide: Small ribosomal subunit protein bS16 (110 aa).

The tract at residues 84-110 (KREARNNPEKAVPRKERKAAAEAAAKK) is disordered.

The protein belongs to the bacterial ribosomal protein bS16 family.

This Rhodopseudomonas palustris (strain BisB18) protein is Small ribosomal subunit protein bS16.